The chain runs to 309 residues: Protein FdhE homolog (309 aa).

The segment at 1–22 (MSIRIVPQEQLEQNGKSTPEGH) is disordered.

It belongs to the FdhE family.

It is found in the cytoplasm. Functionally, necessary for formate dehydrogenase activity. This is Protein FdhE homolog from Pectobacterium carotovorum subsp. carotovorum (strain PC1).